We begin with the raw amino-acid sequence, 248 residues long: Ribonuclease PH (248 aa).

Phosphate-binding positions include arginine 86 and glycine 124–arginine 126.

Belongs to the RNase PH family. Homohexameric ring arranged as a trimer of dimers.

It catalyses the reaction tRNA(n+1) + phosphate = tRNA(n) + a ribonucleoside 5'-diphosphate. Functionally, phosphorolytic 3'-5' exoribonuclease that plays an important role in tRNA 3'-end maturation. Removes nucleotide residues following the 3'-CCA terminus of tRNAs; can also add nucleotides to the ends of RNA molecules by using nucleoside diphosphates as substrates, but this may not be physiologically important. Probably plays a role in initiation of 16S rRNA degradation (leading to ribosome degradation) during starvation. The chain is Ribonuclease PH from Clostridium kluyveri (strain NBRC 12016).